We begin with the raw amino-acid sequence, 513 residues long: Light-independent protochlorophyllide reductase subunit B (513 aa).

Asp-36 serves as a coordination point for [4Fe-4S] cluster. The active-site Proton donor is Asp-299. 434–435 (GM) is a substrate binding site.

Belongs to the ChlB/BchB/BchZ family. In terms of assembly, protochlorophyllide reductase is composed of three subunits; ChlL, ChlN and ChlB. Forms a heterotetramer of two ChlB and two ChlN subunits. [4Fe-4S] cluster serves as cofactor.

Its subcellular location is the plastid. The protein localises to the chloroplast. It carries out the reaction chlorophyllide a + oxidized 2[4Fe-4S]-[ferredoxin] + 2 ADP + 2 phosphate = protochlorophyllide a + reduced 2[4Fe-4S]-[ferredoxin] + 2 ATP + 2 H2O. It participates in porphyrin-containing compound metabolism; chlorophyll biosynthesis (light-independent). Component of the dark-operative protochlorophyllide reductase (DPOR) that uses Mg-ATP and reduced ferredoxin to reduce ring D of protochlorophyllide (Pchlide) to form chlorophyllide a (Chlide). This reaction is light-independent. The NB-protein (ChlN-ChlB) is the catalytic component of the complex. The sequence is that of Light-independent protochlorophyllide reductase subunit B from Staurastrum punctulatum (Green alga).